Here is a 397-residue protein sequence, read N- to C-terminus: Tubby-like protein 8 (397 aa).

Positions 1 to 16 are enriched in basic and acidic residues; it reads MAGSRKVNDLLEENKG. The interval 1-46 is disordered; sequence MAGSRKVNDLLEENKGNVDTITGSLSTQKGEDKENVSPEKVSTSVE. Positions 17 to 28 are enriched in polar residues; sequence NVDTITGSLSTQ.

This sequence belongs to the TUB family. As to expression, mostly expressed in roots, flowers and siliques.

In Arabidopsis thaliana (Mouse-ear cress), this protein is Tubby-like protein 8.